A 76-amino-acid polypeptide reads, in one-letter code: Small ribosomal subunit protein bS18 (76 aa).

This sequence belongs to the bacterial ribosomal protein bS18 family. In terms of assembly, part of the 30S ribosomal subunit. Forms a tight heterodimer with protein bS6.

Binds as a heterodimer with protein bS6 to the central domain of the 16S rRNA, where it helps stabilize the platform of the 30S subunit. The protein is Small ribosomal subunit protein bS18 of Marinobacter nauticus (strain ATCC 700491 / DSM 11845 / VT8) (Marinobacter aquaeolei).